A 197-amino-acid chain; its full sequence is ATP synthase subunit delta (197 aa).

The protein belongs to the ATPase delta chain family. F-type ATPases have 2 components, F(1) - the catalytic core - and F(0) - the membrane proton channel. F(1) has five subunits: alpha(3), beta(3), gamma(1), delta(1), epsilon(1). F(0) has three main subunits: a(1), b(2) and c(10-14). The alpha and beta chains form an alternating ring which encloses part of the gamma chain. F(1) is attached to F(0) by a central stalk formed by the gamma and epsilon chains, while a peripheral stalk is formed by the delta and b chains.

Its subcellular location is the cell inner membrane. In terms of biological role, f(1)F(0) ATP synthase produces ATP from ADP in the presence of a proton or sodium gradient. F-type ATPases consist of two structural domains, F(1) containing the extramembraneous catalytic core and F(0) containing the membrane proton channel, linked together by a central stalk and a peripheral stalk. During catalysis, ATP synthesis in the catalytic domain of F(1) is coupled via a rotary mechanism of the central stalk subunits to proton translocation. Functionally, this protein is part of the stalk that links CF(0) to CF(1). It either transmits conformational changes from CF(0) to CF(1) or is implicated in proton conduction. This Bartonella henselae (strain ATCC 49882 / DSM 28221 / CCUG 30454 / Houston 1) (Rochalimaea henselae) protein is ATP synthase subunit delta.